An 846-amino-acid polypeptide reads, in one-letter code: Protein IRS1 (846 aa).

Disordered regions lie at residues 1-82, 366-385, 606-626, and 714-846; these read MAQR…NFWH, TGTAAGTTSPPAASGTETEA, WLMEQPPPPSRQTKPDAATMP, and QVIP…HVHH. The span at 16–25 shows a compositional bias: gly residues; it reads RGRGAGGPSG. Residues 26-56 show a composition bias toward low complexity; sequence VGSSPPSSCVPMGAPSTAGTGASAAATTTPG. A compositionally biased stretch (acidic residues) spans 722–732; the sequence is EPEDDDEDPTY. Basic residues predominate over residues 832-846; it reads RPKKCQTHAPHHVHH.

The protein belongs to the herpesviridae US22 family. Interacts (via N-terminus) with the viral DNA polymerase accessory subunit UL44. Interacts (via C-terminus) with host EIF2AK2/PKR.

The protein localises to the virion. It localises to the host cytoplasm. It is found in the host nucleus. Functionally, inhibits the establishment of the antiviral state in the infected cell. Prevents the phosphorylation of the host eukaryotic translation initiation factor eIF-2alpha and thus the shutoff of viral and cellular protein synthesis by directly interacting with EIF2AK2/PKR. May also participate in viral DNA replication by interacting with the DNA polymerase accessory protein and the lytic origin of replication, oriLyt. In Homo sapiens (Human), this protein is Protein IRS1 (IRS1).